A 427-amino-acid chain; its full sequence is Enolase (427 aa).

Position 163 (Gln163) interacts with (2R)-2-phosphoglycerate. Glu205 acts as the Proton donor in catalysis. Mg(2+) contacts are provided by Asp242, Glu285, and Asp312. (2R)-2-phosphoglycerate contacts are provided by Lys337, Arg366, Ser367, and Lys388. Residue Lys337 is the Proton acceptor of the active site.

This sequence belongs to the enolase family. The cofactor is Mg(2+).

It localises to the cytoplasm. The protein localises to the secreted. Its subcellular location is the cell surface. It carries out the reaction (2R)-2-phosphoglycerate = phosphoenolpyruvate + H2O. Its pathway is carbohydrate degradation; glycolysis; pyruvate from D-glyceraldehyde 3-phosphate: step 4/5. Catalyzes the reversible conversion of 2-phosphoglycerate (2-PG) into phosphoenolpyruvate (PEP). It is essential for the degradation of carbohydrates via glycolysis. This Bradyrhizobium sp. (strain ORS 278) protein is Enolase.